Here is a 151-residue protein sequence, read N- to C-terminus: Transcriptional regulator MraZ (151 aa).

SpoVT-AbrB domains are found at residues Ala-5–Glu-52 and Ala-81–Ala-124.

The protein belongs to the MraZ family. As to quaternary structure, forms oligomers.

The protein resides in the cytoplasm. Its subcellular location is the nucleoid. This is Transcriptional regulator MraZ from Pseudomonas putida (strain W619).